A 757-amino-acid chain; its full sequence is MKHPLFNQKVLAGFVSMLLISGSAFASNNEKSEMTKPKGAVGTGVALENQARTNQFWWPDQLNLSALRDHDKRSNPYGENFDYAKAFNSLDLDKVKLDINALLTTSQDWWPSDYSNYGPFFIRMTWHSAGTYRTLDGRGGAGGGQQRFEPLNSWPDNASLDKARRLLWPIKMKYGEAISWSDLIVLAGNVSLENMGFKTYGFAGGRHDDWEPDMVYWGPEIEMLASDREDNGGKLQRPLGATHMGLIYVNPEGPKGVPDPLGSAKNIRVAFERMAMNDEETLALIAGGHTFGKMHGAHKPKDCLGAEPAAAGIEEQGLGWKNKCGKGHSEDTITSGLEGAWTQAPTKWTSLYLSNLLTFEWKQTRSPAGAIQWIPTDESLHKAVPDAHVKGKFHAPVMTTADLALKYDPEYRKIAERFLADPEEYRLAFAKAWYKLTHRDMGPSRNFLGKEVPKESLIWQDPIDDKTQSNIDADGVQELKAQILKSNLTVSELVRVAWASAASYRHSDMRGGANGARIALSPQKDWSVNNPAETAKVIKTLKAIQEDYNDSLFSKSKVSLADLIVLGGTAAIEKAAKDAGFTVSVPFNAGRGDATQAMTDINAFSLLELTSDGFRNYFDAQQSYKSPVDMLVDKADQLNLSVPEMTVLVGGLRALDANYKGLKHGVLTSTPGTLNNDFFVNLLDMSTVWKKSSTDGIYEGFDRQSGHKKWTATSVDLVFGSNSELRAVSEVYAFDTSKQKFVEDFAAAWTKVMNLDR.

The first 26 residues, 1-26 (MKHPLFNQKVLAGFVSMLLISGSAFA), serve as a signal peptide directing secretion. A cross-link (tryptophyl-tyrosyl-methioninium (Trp-Tyr) (with M-274)) is located at residues 126 to 248 (WHSAGTYRTL…LGATHMGLIY (123 aa)). His127 (proton acceptor) is an active-site residue. The segment at residues 248–274 (YVNPEGPKGVPDPLGSAKNIRVAFERM) is a cross-link (tryptophyl-tyrosyl-methioninium (Tyr-Met) (with W-126)). His289 lines the heme b pocket.

This sequence belongs to the peroxidase family. Peroxidase/catalase subfamily. As to quaternary structure, homodimer or homotetramer. The cofactor is heme b. Formation of the three residue Trp-Tyr-Met cross-link is important for the catalase, but not the peroxidase activity of the enzyme.

The enzyme catalyses H2O2 + AH2 = A + 2 H2O. The catalysed reaction is 2 H2O2 = O2 + 2 H2O. Functionally, bifunctional enzyme with both catalase and broad-spectrum peroxidase activity. The chain is Catalase-peroxidase 2 from Shewanella frigidimarina (strain NCIMB 400).